A 1224-amino-acid polypeptide reads, in one-letter code: A disintegrin and metalloproteinase with thrombospondin motifs 16 (1224 aa).

The N-terminal stretch at 1–24 is a signal peptide; the sequence is MKPRARGWRGLAALWMLLAQVAEQ. A propeptide spanning residues 25–279 is cleaved from the precursor; sequence APACAMGPAA…EYKSCLRHKR (255 aa). The tract at residues 31-53 is disordered; the sequence is GPAAAAPGSPSVPRPPPPAERPG. The span at 40-50 shows a compositional bias: pro residues; sequence PSVPRPPPPAE. Asn-156 carries an N-linked (GlcNAc...) asparagine glycan. A Cysteine switch motif is present at residues 247–254; sequence HFCGRRKK. Cys-249 lines the Zn(2+) pocket. One can recognise a Peptidase M12B domain in the interval 290–495; sequence LNVETLVVVD…AQAICLADQP (206 aa). N-linked (GlcNAc...) asparagine glycosylation is present at Asn-310. Intrachain disulfides connect Cys-366/Cys-417, Cys-392/Cys-399, Cys-411/Cys-490, Cys-450/Cys-474, Cys-518/Cys-543, Cys-529/Cys-550, Cys-538/Cys-569, Cys-563/Cys-574, Cys-598/Cys-635, Cys-602/Cys-640, and Cys-613/Cys-625. His-433 is a Zn(2+) binding site. The active site involves Glu-434. 2 residues coordinate Zn(2+): His-437 and His-443. Residues 496 to 585 form the Disintegrin domain; that stretch reads KPVKEYKYPE…KYGDEGPKPT (90 aa). The TSP type-1 1 domain occupies 586-641; that stretch reads HGHWSDWSSWSPCSRTCGGGVSHRSRLCTNPKPSHGGKFCEGSTRTLKLCNSQKCP. Residues Asn-741, Asn-780, Asn-835, Asn-905, and Asn-935 are each glycosylated (N-linked (GlcNAc...) asparagine). Residues 747–873 are spacer; it reads IHRGLYTKHH…KQPPAQPSYT (127 aa). 5 consecutive TSP type-1 domains span residues 874 to 922, 927 to 987, 988 to 1048, 1051 to 1115, and 1127 to 1181; these read WAIV…LVPC, CPPS…QSCP, PAWS…QRCH, KKLQ…LPCP, and RGSW…HFCP. Cystine bridges form between Cys-939–Cys-981, Cys-943–Cys-986, and Cys-954–Cys-970. The PLAC domain occupies 1186–1223; the sequence is KDAFCKDYFHWCYLVPQHGMCSHKFYGKQCCKTCSKSN.

Zn(2+) serves as cofactor. In terms of processing, the precursor is cleaved by a furin endopeptidase. Post-translationally, glycosylated. Can be O-fucosylated by POFUT2 on a serine or a threonine residue found within the consensus sequence C1-X(2)-(S/T)-C2-G of the TSP type-1 repeat domains where C1 and C2 are the first and second cysteine residue of the repeat, respectively. Fucosylated repeats can then be further glycosylated by the addition of a beta-1,3-glucose residue by the glucosyltransferase, B3GALTL. Fucosylation mediates the efficient secretion of ADAMTS family members. Can also be C-glycosylated with one or two mannose molecules on tryptophan residues within the consensus sequence W-X-X-W of the TPRs, and N-glycosylated. These other glycosylations can also facilitate secretion. As to expression, expressed in fetal lung and kidney and in adult prostate and ovary.

Its subcellular location is the secreted. It is found in the extracellular space. The protein localises to the extracellular matrix. The chain is A disintegrin and metalloproteinase with thrombospondin motifs 16 (ADAMTS16) from Homo sapiens (Human).